Here is a 288-residue protein sequence, read N- to C-terminus: 4-hydroxy-3-methylbut-2-enyl diphosphate reductase (288 aa).

Cys12 contacts [4Fe-4S] cluster. His42 and His77 together coordinate (2E)-4-hydroxy-3-methylbut-2-enyl diphosphate. Positions 42 and 77 each coordinate dimethylallyl diphosphate. The isopentenyl diphosphate site is built by His42 and His77. Cys99 provides a ligand contact to [4Fe-4S] cluster. (2E)-4-hydroxy-3-methylbut-2-enyl diphosphate is bound at residue His127. Residue His127 participates in dimethylallyl diphosphate binding. His127 serves as a coordination point for isopentenyl diphosphate. Glu129 serves as the catalytic Proton donor. Residue Thr165 coordinates (2E)-4-hydroxy-3-methylbut-2-enyl diphosphate. Residue Cys193 participates in [4Fe-4S] cluster binding. Residues Ser221, Ser222, Asn223, and Ser265 each contribute to the (2E)-4-hydroxy-3-methylbut-2-enyl diphosphate site. Residues Ser221, Ser222, Asn223, and Ser265 each contribute to the dimethylallyl diphosphate site. Isopentenyl diphosphate-binding residues include Ser221, Ser222, Asn223, and Ser265.

Belongs to the IspH family. [4Fe-4S] cluster serves as cofactor.

It carries out the reaction isopentenyl diphosphate + 2 oxidized [2Fe-2S]-[ferredoxin] + H2O = (2E)-4-hydroxy-3-methylbut-2-enyl diphosphate + 2 reduced [2Fe-2S]-[ferredoxin] + 2 H(+). The catalysed reaction is dimethylallyl diphosphate + 2 oxidized [2Fe-2S]-[ferredoxin] + H2O = (2E)-4-hydroxy-3-methylbut-2-enyl diphosphate + 2 reduced [2Fe-2S]-[ferredoxin] + 2 H(+). It participates in isoprenoid biosynthesis; dimethylallyl diphosphate biosynthesis; dimethylallyl diphosphate from (2E)-4-hydroxy-3-methylbutenyl diphosphate: step 1/1. Its pathway is isoprenoid biosynthesis; isopentenyl diphosphate biosynthesis via DXP pathway; isopentenyl diphosphate from 1-deoxy-D-xylulose 5-phosphate: step 6/6. Functionally, catalyzes the conversion of 1-hydroxy-2-methyl-2-(E)-butenyl 4-diphosphate (HMBPP) into a mixture of isopentenyl diphosphate (IPP) and dimethylallyl diphosphate (DMAPP). Acts in the terminal step of the DOXP/MEP pathway for isoprenoid precursor biosynthesis. The chain is 4-hydroxy-3-methylbut-2-enyl diphosphate reductase from Thermoanaerobacter pseudethanolicus (strain ATCC 33223 / 39E) (Clostridium thermohydrosulfuricum).